A 160-amino-acid polypeptide reads, in one-letter code: Protein CrtK (160 aa).

5 helical membrane-spanning segments follow: residues 3 to 23 (LTLF…GAIF), 37 to 57 (WVPP…LMSI), 76 to 96 (LAFW…FFGL), 101 to 121 (GGML…VLFW), and 129 to 149 (LMFV…FSVW).

This sequence belongs to the TspO/BZRP family.

The protein localises to the cell inner membrane. Its pathway is carotenoid biosynthesis; spheroidene biosynthesis. In Rhodobacter capsulatus (strain ATCC BAA-309 / NBRC 16581 / SB1003), this protein is Protein CrtK (crtK).